Reading from the N-terminus, the 68-residue chain is Conotoxin mr3g (68 aa).

A signal peptide spans 1–19 (MSKLGVLLTICLLLFALTA). A propeptide spanning residues 20–51 (VPLDGDQPADRPAERMQDDISSERHPMFDAVR) is cleaved from the precursor. 3 disulfides stabilise this stretch: C53–C67, C54–C63, and C59–C66. 4-hydroxyproline occurs at positions 55 and 65. C67 bears the Cysteine amide mark.

Expressed by the venom duct.

Its subcellular location is the secreted. In terms of biological role, intracranially injection into mice does not elicit symptoms. The chain is Conotoxin mr3g from Conus marmoreus (Marble cone).